The chain runs to 121 residues: Small ribosomal subunit protein uS13 (121 aa).

The interval histidine 91–lysine 121 is disordered.

Belongs to the universal ribosomal protein uS13 family. In terms of assembly, part of the 30S ribosomal subunit. Forms a loose heterodimer with protein S19. Forms two bridges to the 50S subunit in the 70S ribosome.

Functionally, located at the top of the head of the 30S subunit, it contacts several helices of the 16S rRNA. In the 70S ribosome it contacts the 23S rRNA (bridge B1a) and protein L5 of the 50S subunit (bridge B1b), connecting the 2 subunits; these bridges are implicated in subunit movement. Contacts the tRNAs in the A and P-sites. In Cupriavidus taiwanensis (strain DSM 17343 / BCRC 17206 / CCUG 44338 / CIP 107171 / LMG 19424 / R1) (Ralstonia taiwanensis (strain LMG 19424)), this protein is Small ribosomal subunit protein uS13.